Consider the following 296-residue polypeptide: Fructose-bisphosphate aldolase class 1 (296 aa).

The Proton acceptor role is filled by Glu-175. Catalysis depends on Lys-212, which acts as the Schiff-base intermediate with dihydroxyacetone-P.

This sequence belongs to the class I fructose-bisphosphate aldolase family.

The catalysed reaction is beta-D-fructose 1,6-bisphosphate = D-glyceraldehyde 3-phosphate + dihydroxyacetone phosphate. It participates in carbohydrate degradation; glycolysis; D-glyceraldehyde 3-phosphate and glycerone phosphate from D-glucose: step 4/4. This chain is Fructose-bisphosphate aldolase class 1, found in Staphylococcus aureus (strain MSSA476).